Here is a 190-residue protein sequence, read N- to C-terminus: Lipid A acyltransferase PagP (190 aa).

The first 18 residues, M1–A18, serve as a signal peptide directing secretion. Catalysis depends on residues H60, D103, and S104.

The protein belongs to the lipid A palmitoyltransferase family. In terms of assembly, homodimer.

The protein resides in the cell outer membrane. It catalyses the reaction a lipid A + a 1,2-diacyl-sn-glycero-3-phosphocholine = a hepta-acyl lipid A + a 2-acyl-sn-glycero-3-phosphocholine. The catalysed reaction is a lipid IVA + a 1,2-diacyl-sn-glycero-3-phosphocholine = a lipid IVB + a 2-acyl-sn-glycero-3-phosphocholine. It carries out the reaction a lipid IIA + a 1,2-diacyl-sn-glycero-3-phosphocholine = a lipid IIB + a 2-acyl-sn-glycero-3-phosphocholine. In terms of biological role, transfers a fatty acid residue from the sn-1 position of a phospholipid to the N-linked hydroxyfatty acid chain on the proximal unit of lipid A or its precursors. The polypeptide is Lipid A acyltransferase PagP (Legionella pneumophila (strain Paris)).